A 131-amino-acid chain; its full sequence is MKYFVVALALVAAFACIAESKPAESEHELAEVEEENELADLEDAVWLEHLADLSDLEEARGFFGNTWKKIKGKADKIMLKKAVKIMVKKEGISKEEAQAKVDAMSKKQIRLYLLKYYGKKLFKKRPKNCDQ.

Residues 1-20 form the signal peptide; that stretch reads MKYFVVALALVAAFACIAES. A propeptide spanning residues 21–60 is cleaved from the precursor; that stretch reads KPAESEHELAEVEEENELADLEDAVWLEHLADLSDLEEAR.

Belongs to the cationic peptide 06 (cytoinsectotoxin) family. As to expression, expressed by the venom gland.

It localises to the secreted. Functionally, insecticidal, cytolytic and antimicrobial peptide. Forms voltage-dependent, ion-permeable channels in membranes. At high concentration causes cell membrane lysis. This chain is M-zodatoxin-Lt8o (cit 1-14), found in Lachesana tarabaevi (Spider).